Consider the following 463-residue polypeptide: Cytochrome P450 4d8 (463 aa).

Positions 267 and 409 each coordinate heme.

This sequence belongs to the cytochrome P450 family. Heme is required as a cofactor.

The protein resides in the endoplasmic reticulum membrane. Its subcellular location is the microsome membrane. Functionally, may be involved in the metabolism of insect hormones and in the breakdown of synthetic insecticides. The polypeptide is Cytochrome P450 4d8 (Cyp4d8) (Drosophila melanogaster (Fruit fly)).